Reading from the N-terminus, the 240-residue chain is 6-phosphogluconolactonase (240 aa).

The protein belongs to the glucosamine/galactosamine-6-phosphate isomerase family. 6-phosphogluconolactonase subfamily.

It carries out the reaction 6-phospho-D-glucono-1,5-lactone + H2O = 6-phospho-D-gluconate + H(+). Its pathway is carbohydrate degradation; pentose phosphate pathway; D-ribulose 5-phosphate from D-glucose 6-phosphate (oxidative stage): step 2/3. Its function is as follows. Hydrolysis of 6-phosphogluconolactone to 6-phosphogluconate. This is 6-phosphogluconolactonase (pgl) from Synechocystis sp. (strain ATCC 27184 / PCC 6803 / Kazusa).